The chain runs to 759 residues: TSK-associating protein 1 (759 aa).

Positions 1-29 (MEIYTMKTNFLVLALSLCILLSSFHEVSC) are cleaved as a signal peptide. The tract at residues 55–74 (GKDDEDQSAKIQSENQNNTT) is disordered. Over residues 63–74 (AKIQSENQNNTT) the composition is skewed to polar residues. 10 EFE repeat repeats span residues 91–138 (VGSV…DEEL), 139–176 (SAHR…DEEH), 177–215 (SAKR…DEEH), 216–254 (SAKR…DEEQ), 255–293 (SAKR…EEEH), 294–329 (AAKG…DKEH), 330–368 (FTAA…DDEQ), 369–407 (SAKR…NEEQ), 408–443 (SAKR…LEEE), and 444–473 (SAKR…DKEE). A 10 X approximate EFE repeat region spans residues 91–473 (VGSVSDESVG…GINAKADKEE (383 aa)). 2 coiled-coil regions span residues 142 to 461 (RQKM…FEEA) and 685 to 734 (IKKL…AKDE). 4 disordered regions span residues 154–184 (EAAS…QSLL), 200–219 (QLKV…SAKR), 271–332 (AASK…HFTA), and 393–414 (LKAN…RKSM).

In terms of assembly, homomultimer. Interacts (via C-terminal domain) with GIP1, CSN1 (via N-terminal domain) and TSK (via TPR repeats). Post-translationally, binds calcium through the EFE repeats. Expressed preferentially in flowers and shoot apex.

It is found in the endoplasmic reticulum lumen. It localises to the nucleus envelope. The protein localises to the cytoplasm. Functionally, involved in seedling development in the dark. May be involved, when interacting with TSK, in the organization of spindle microtubules and may participate, when interacting with GIP1, in structural links between the nuclear envelope and the cytoskeleton. The protein is TSK-associating protein 1 (TSA1) of Arabidopsis thaliana (Mouse-ear cress).